The primary structure comprises 141 residues: Large ribosomal subunit protein uL11 (141 aa).

It belongs to the universal ribosomal protein uL11 family. As to quaternary structure, part of the ribosomal stalk of the 50S ribosomal subunit. Interacts with L10 and the large rRNA to form the base of the stalk. L10 forms an elongated spine to which L12 dimers bind in a sequential fashion forming a multimeric L10(L12)X complex. Post-translationally, one or more lysine residues are methylated.

Its function is as follows. Forms part of the ribosomal stalk which helps the ribosome interact with GTP-bound translation factors. The chain is Large ribosomal subunit protein uL11 from Fusobacterium nucleatum subsp. nucleatum (strain ATCC 25586 / DSM 15643 / BCRC 10681 / CIP 101130 / JCM 8532 / KCTC 2640 / LMG 13131 / VPI 4355).